We begin with the raw amino-acid sequence, 292 residues long: NAD kinase (292 aa).

Asp-74 acts as the Proton acceptor in catalysis. NAD(+)-binding positions include 74-75, 147-148, Asp-177, and 188-193; these read DG, NE, and TGYSLS.

The protein belongs to the NAD kinase family. A divalent metal cation is required as a cofactor.

It is found in the cytoplasm. The enzyme catalyses NAD(+) + ATP = ADP + NADP(+) + H(+). Functionally, involved in the regulation of the intracellular balance of NAD and NADP, and is a key enzyme in the biosynthesis of NADP. Catalyzes specifically the phosphorylation on 2'-hydroxyl of the adenosine moiety of NAD to yield NADP. This is NAD kinase from Cytophaga hutchinsonii (strain ATCC 33406 / DSM 1761 / CIP 103989 / NBRC 15051 / NCIMB 9469 / D465).